The sequence spans 247 residues: Flavin-dependent thymidylate synthase (247 aa).

The ThyX domain maps to Met1 to Glu237. DUMP is bound by residues Gln85–Arg88, Ser98–Arg100, and Arg176. Arg88 to Arg90 lines the FAD pocket. The short motif at Arg88 to Ser98 is the ThyX motif element. FAD is bound by residues Asn192–Arg194 and His198. Arg203 is a dUMP binding site. Arg203 functions as the Involved in ionization of N3 of dUMP, leading to its activation in the catalytic mechanism.

The protein belongs to the thymidylate synthase ThyX family. Homotetramer. It depends on FAD as a cofactor.

The enzyme catalyses dUMP + (6R)-5,10-methylene-5,6,7,8-tetrahydrofolate + NADPH + H(+) = dTMP + (6S)-5,6,7,8-tetrahydrofolate + NADP(+). It participates in pyrimidine metabolism; dTTP biosynthesis. Functionally, catalyzes the reductive methylation of 2'-deoxyuridine-5'-monophosphate (dUMP) to 2'-deoxythymidine-5'-monophosphate (dTMP) while utilizing 5,10-methylenetetrahydrofolate (mTHF) as the methyl donor, and NADPH and FADH(2) as the reductant. The polypeptide is Flavin-dependent thymidylate synthase (Haloarcula marismortui (strain ATCC 43049 / DSM 3752 / JCM 8966 / VKM B-1809) (Halobacterium marismortui)).